The chain runs to 204 residues: Holliday junction resolvase RecU (204 aa).

Residues Met1–Pro24 form a disordered region. A compositionally biased stretch (polar residues) spans Asn7 to Pro24. The Mg(2+) site is built by Thr87, Asp89, Asp102, and Gln121.

It belongs to the RecU family. The cofactor is Mg(2+).

The protein resides in the cytoplasm. The enzyme catalyses Endonucleolytic cleavage at a junction such as a reciprocal single-stranded crossover between two homologous DNA duplexes (Holliday junction).. Endonuclease that resolves Holliday junction intermediates in genetic recombination. Cleaves mobile four-strand junctions by introducing symmetrical nicks in paired strands. Promotes annealing of linear ssDNA with homologous dsDNA. Required for DNA repair, homologous recombination and chromosome segregation. The protein is Holliday junction resolvase RecU of Limosilactobacillus reuteri (strain DSM 20016) (Lactobacillus reuteri).